Consider the following 203-residue polypeptide: 8-oxoguanine DNA glycosylase/AP lyase (203 aa).

Catalysis depends on residues K128 and D146.

This sequence belongs to the type-2 OGG1 family.

The catalysed reaction is 2'-deoxyribonucleotide-(2'-deoxyribose 5'-phosphate)-2'-deoxyribonucleotide-DNA = a 3'-end 2'-deoxyribonucleotide-(2,3-dehydro-2,3-deoxyribose 5'-phosphate)-DNA + a 5'-end 5'-phospho-2'-deoxyribonucleoside-DNA + H(+). Catalyzes the excision of an oxidatively damaged form of guanine (7,8-dihydro-8-oxoguanine = 8-oxoG) from DNA. Also cleaves the DNA backbone at apurinic/apyrimidinic sites (AP sites). This Sulfolobus acidocaldarius (strain ATCC 33909 / DSM 639 / JCM 8929 / NBRC 15157 / NCIMB 11770) protein is 8-oxoguanine DNA glycosylase/AP lyase.